An 842-amino-acid chain; its full sequence is Type VI secretion system spike protein VgrG2a (842 aa).

Residues 265 to 291 are disordered; it reads RSGAGRPFSESRLRGHRRDARVASVSG.

Belongs to the VgrG protein family.

Part of the H2 type VI secretion system (H2-T6SS) specialized secretion system, which delivers several virulence factors in both prokaryotic and eukaryotic cells during infection. May form the spike at the tip of the elongating tube formed by haemolysin co-regulated protein 2a/Hcp2a. In turn, may allow the delivery of the Tle4 antibacterial toxin to target cells where it exerts its toxicity. Also promotes the release of VgrG2b toxin to the host cell. The protein is Type VI secretion system spike protein VgrG2a of Pseudomonas aeruginosa (strain ATCC 15692 / DSM 22644 / CIP 104116 / JCM 14847 / LMG 12228 / 1C / PRS 101 / PAO1).